Here is a 635-residue protein sequence, read N- to C-terminus: Biosynthetic arginine decarboxylase (635 aa).

Lys100 carries the N6-(pyridoxal phosphate)lysine modification. Position 282–292 (282–292 (LDIGGGLGVDY)) interacts with substrate.

It belongs to the Orn/Lys/Arg decarboxylase class-II family. SpeA subfamily. It depends on Mg(2+) as a cofactor. Pyridoxal 5'-phosphate serves as cofactor.

It carries out the reaction L-arginine + H(+) = agmatine + CO2. It functions in the pathway amine and polyamine biosynthesis; agmatine biosynthesis; agmatine from L-arginine: step 1/1. Functionally, catalyzes the biosynthesis of agmatine from arginine. This Trichlorobacter lovleyi (strain ATCC BAA-1151 / DSM 17278 / SZ) (Geobacter lovleyi) protein is Biosynthetic arginine decarboxylase.